The following is a 424-amino-acid chain: Calreticulin (424 aa).

Positions 1 to 19 are cleaved as a signal peptide; sequence MRLLLCLIFLVFVFNFALS. Cysteines 105 and 137 form a disulfide. An alpha-D-glucoside contacts are provided by tyrosine 109, lysine 111, tyrosine 128, and aspartate 135. 7 consecutive repeat copies span residues 191–202, 210–221, 227–238, 246–256, 260–270, 274–284, and 288–298. The segment at 191 to 256 is 4 X 12 AA approximate repeats; that stretch reads IQAGNLADDW…EAVKPEDWNE (66 aa). A 3 X 11 AA approximate repeats region spans residues 260 to 298; that stretch reads GEWEAPTIANPEYKGEWKAKKIPNPEYKGEWVHPLIDNP. Glutamate 318 lines the an alpha-D-glucoside pocket. Residues 370-385 are compositionally biased toward basic and acidic residues; the sequence is RKKADEKLAAEKAAEK. A disordered region spans residues 370-424; the sequence is RKKADEKLAAEKAAEKEAEEADEEEEEVAEEDLVKTDDKKEEVKKSTKKVDHDEL. Acidic residues predominate over residues 386 to 400; the sequence is EAEEADEEEEEVAEE. A compositionally biased stretch (basic and acidic residues) spans 401-424; sequence DLVKTDDKKEEVKKSTKKVDHDEL. The Prevents secretion from ER motif lies at 421–424; that stretch reads HDEL.

It belongs to the calreticulin family.

The protein resides in the endoplasmic reticulum lumen. Molecular calcium-binding chaperone promoting folding, oligomeric assembly and quality control in the ER via the calreticulin/calnexin cycle. This lectin may interact transiently with almost all of the monoglucosylated glycoproteins that are synthesized in the ER. The chain is Calreticulin (crtA) from Dictyostelium discoideum (Social amoeba).